The sequence spans 300 residues: GTPase Era (300 aa).

In terms of domain architecture, Era-type G spans 5–176 (RSGFVCLIGR…IDVLAAALPP (172 aa)). A G1 region spans residues 13–20 (GRPNTGKS). Residue 13–20 (GRPNTGKS) participates in GTP binding. A G2 region spans residues 39 to 43 (QTTRH). A G3 region spans residues 61 to 64 (DTPG). GTP contacts are provided by residues 61-65 (DTPGL) and 125-128 (TKID). Residues 125–128 (TKID) are G4. Positions 155–157 (VSA) are G5. Positions 207-286 (VHDELPHSLA…YLDLHVNVAK (80 aa)) constitute a KH type-2 domain.

Belongs to the TRAFAC class TrmE-Era-EngA-EngB-Septin-like GTPase superfamily. Era GTPase family. In terms of assembly, monomer.

It is found in the cell envelope. It localises to the secreted. The protein resides in the cell wall. Exhibits GTPase activity. Binds RNA but is probably not involved in ribosome assembly in mycobacteria. This chain is GTPase Era, found in Mycobacterium leprae (strain TN).